The chain runs to 1859 residues: Protein TIC 214 (1859 aa).

A run of 6 helical transmembrane segments spans residues isoleucine 18–glycine 38, phenylalanine 64–leucine 84, proline 87–histidine 107, leucine 124–leucine 144, valine 172–isoleucine 192, and isoleucine 221–isoleucine 241. The disordered stretch occupies residues lysine 247–glutamate 314. Residues glycine 256–threonine 268 are compositionally biased toward acidic residues. Over residues lysine 273–glutamate 284 the composition is skewed to basic and acidic residues. The segment covering glutamate 295–glutamate 306 has biased composition (acidic residues).

The protein belongs to the TIC214 family. Part of the Tic complex.

It is found in the plastid. The protein resides in the chloroplast inner membrane. Functionally, involved in protein precursor import into chloroplasts. May be part of an intermediate translocation complex acting as a protein-conducting channel at the inner envelope. In Buxus microphylla (Littleleaf boxwood), this protein is Protein TIC 214.